Here is a 672-residue protein sequence, read N- to C-terminus: MLPFHLVRTQAGRVIPVLLAALFLAGCPSHAPQSPPPEVQGKADASSDYYLQQMQQSSDNNKADWQLLAIRSLLQEGKAPQASQQFNTLPEKLSAAQKQEQQLLSAELSAAQNNMDAAKAALSQLDVGALSEQQKSRYYQTQIKTAQGRPSIELLRAYIAQEPLLKGDEHQMNLDQTWLALTQMSPQESGALLINADENVLQGWVDLLNNYQNNRESPDQLQSAIQDWKTRYPHHPAAKNLPMQLNQVINYQPSSVSSIALLLPLNGQAQVFANAIQQGFNAAKNGQIATAAVSAPVAPPTDTAQAGQVTPSSDGQNAQSPAPYSDQAVASTTPAPAAQATSAGLSSSLPVKVYDTSSQPLANILTQAQQDGASLVIGPLLKNEVDQLASNPSPLNILALNQPERVENSPNICYFALSPEDEARDAAKFIHQQGKQQPLVLAPRGALGDRIVNAFAQAWNQQSGTSALQQRFGNSAELKQAINSGAGLSLNGQPVNVSQQQAQAGTTIGGLTIPSQVQPTASSSVSGNIDAVYIIATPDELALIKPMIDMRTSSRARPALYASSRSFQAGLGPDFRLEMEGLQFSDIPLLAGANPALMQQVSSQFKNDYSLVRLYAMGMDAWTLASHFGEMRQIPGHQISGATGMLSAGPDCTINRQLTWQQYRQGQLVPVL.

The signal sequence occupies residues 1 to 26 (MLPFHLVRTQAGRVIPVLLAALFLAG). A lipid anchor (N-palmitoyl cysteine) is attached at Cys-27. Residue Cys-27 is the site of S-diacylglycerol cysteine attachment. The segment at 298 to 336 (APPTDTAQAGQVTPSSDGQNAQSPAPYSDQAVASTTPAP) is disordered. The span at 305-322 (QAGQVTPSSDGQNAQSPA) shows a compositional bias: polar residues. Low complexity predominate over residues 327 to 336 (QAVASTTPAP).

Belongs to the LpoA family. Interacts with PBP1a.

It is found in the cell outer membrane. In terms of biological role, regulator of peptidoglycan synthesis that is essential for the function of penicillin-binding protein 1A (PBP1a). This is Penicillin-binding protein activator LpoA from Pectobacterium parmentieri (strain WPP163) (Pectobacterium wasabiae (strain WPP163)).